The primary structure comprises 527 residues: FHA domain-containing protein FhaA (527 aa).

T116 carries the post-translational modification Phosphothreonine. The segment at 119 to 426 (FRARGTVNPD…APGGYSGYGQ (308 aa)) is disordered. Over residues 170 to 188 (RPDEYYDDRYARPQEDPRG) the composition is skewed to basic and acidic residues. Low complexity-rich tracts occupy residues 199–209 (RGGYPPETGGY) and 256–266 (YQDQGRGYPDQ). Residues 271–283 (YPPPYEQRPPVSP) are compositionally biased toward pro residues. Residues 284 to 299 (GPAAGYGAPGYDQGYR) show a composition bias toward low complexity. Positions 300–322 (QSGGYGPSPGGGQPGYGGYGEYG) are enriched in gly residues. The segment covering 345–366 (RPAYPDQGGYDQGYQQGATTYG) has biased composition (low complexity). The FHA domain maps to 455-504 (NIIGRGQDAQFRLPDTGVSRRHLEIRWDGQVALLADLNSTNGTTVNNAPV).

In terms of assembly, interacts with (phosphorylated) MviN and (phosphorylated) PknB via the FHA domain. Binds to the PknB juxtamembrane domain with an affinity that is modulated by the degree and the pattern of phosphorylation of this juxtamembrane domain. Post-translationally, phosphorylated by PknB.

It localises to the cytoplasm. Regulates cell growth and peptidoglycan synthesis by binding to MviN. May inhibit the late stages of peptidoglycan synthesis. This Mycobacterium tuberculosis (strain ATCC 25618 / H37Rv) protein is FHA domain-containing protein FhaA (fhaA).